The following is a 628-amino-acid chain: Monoterpene synthase like 1, chloroplastic (628 aa).

Mg(2+)-binding residues include D379, D383, and D531. Positions 379–383 (DDIYD) match the DDXXD motif motif.

Belongs to the terpene synthase family. Tpsd subfamily. It depends on Mg(2+) as a cofactor. Requires Mn(2+) as cofactor.

It localises to the plastid. It is found in the chloroplast. Its pathway is terpene metabolism; oleoresin biosynthesis. The protein operates within secondary metabolite biosynthesis; terpenoid biosynthesis. In terms of biological role, monoterpene synthase (TPS) involved in the biosynthesis of monoterpene natural products included in conifer oleoresin secretions and volatile emissions; these compounds contribute to biotic and abiotic stress defense against herbivores and pathogens. This chain is Monoterpene synthase like 1, chloroplastic, found in Pinus banksiana (Jack pine).